The following is a 295-amino-acid chain: Acetylglutamate kinase (295 aa).

Substrate contacts are provided by residues 66–67 (GG), Arg88, and Asn193.

It belongs to the acetylglutamate kinase family. ArgB subfamily.

Its subcellular location is the cytoplasm. The catalysed reaction is N-acetyl-L-glutamate + ATP = N-acetyl-L-glutamyl 5-phosphate + ADP. The protein operates within amino-acid biosynthesis; L-arginine biosynthesis; N(2)-acetyl-L-ornithine from L-glutamate: step 2/4. Functionally, catalyzes the ATP-dependent phosphorylation of N-acetyl-L-glutamate. The protein is Acetylglutamate kinase of Allorhizobium ampelinum (strain ATCC BAA-846 / DSM 112012 / S4) (Agrobacterium vitis (strain S4)).